The chain runs to 131 residues: Fimbrial assembly protein, serogroups C1 and C2 (131 aa).

In Dichelobacter nodosus (Bacteroides nodosus), this protein is Fimbrial assembly protein, serogroups C1 and C2 (fimB).